Here is a 222-residue protein sequence, read N- to C-terminus: tRNA (guanine-N(1)-)-methyltransferase (222 aa).

S-adenosyl-L-methionine is bound by residues G110 and 130–135 (IGDYVL).

This sequence belongs to the RNA methyltransferase TrmD family. Homodimer.

The protein localises to the cytoplasm. It carries out the reaction guanosine(37) in tRNA + S-adenosyl-L-methionine = N(1)-methylguanosine(37) in tRNA + S-adenosyl-L-homocysteine + H(+). In terms of biological role, specifically methylates guanosine-37 in various tRNAs. The polypeptide is tRNA (guanine-N(1)-)-methyltransferase (Protochlamydia amoebophila (strain UWE25)).